Here is a 335-residue protein sequence, read N- to C-terminus: Glyceraldehyde-3-phosphate dehydrogenase 1 (335 aa).

NAD(+) is bound by residues 13–14 (TI) and Gly-111. 140–142 (SCN) contributes to the D-glyceraldehyde 3-phosphate binding site. Residue Cys-141 is the Nucleophile of the active site. NAD(+) is bound at residue Arg-169. Residues Thr-171 and 195-196 (HG) contribute to the D-glyceraldehyde 3-phosphate site. Gln-300 serves as a coordination point for NAD(+).

The protein belongs to the glyceraldehyde-3-phosphate dehydrogenase family. As to quaternary structure, homotetramer.

The protein resides in the cytoplasm. It carries out the reaction D-glyceraldehyde 3-phosphate + phosphate + NADP(+) = (2R)-3-phospho-glyceroyl phosphate + NADPH + H(+). The catalysed reaction is D-glyceraldehyde 3-phosphate + phosphate + NAD(+) = (2R)-3-phospho-glyceroyl phosphate + NADH + H(+). It functions in the pathway carbohydrate degradation; glycolysis; pyruvate from D-glyceraldehyde 3-phosphate: step 1/5. The sequence is that of Glyceraldehyde-3-phosphate dehydrogenase 1 (gapA) from Methanosarcina acetivorans (strain ATCC 35395 / DSM 2834 / JCM 12185 / C2A).